Consider the following 78-residue polypeptide: Small ribosomal subunit protein bS18 (78 aa).

The protein belongs to the bacterial ribosomal protein bS18 family. Part of the 30S ribosomal subunit. Forms a tight heterodimer with protein bS6.

Functionally, binds as a heterodimer with protein bS6 to the central domain of the 16S rRNA, where it helps stabilize the platform of the 30S subunit. The protein is Small ribosomal subunit protein bS18 of Frankia casuarinae (strain DSM 45818 / CECT 9043 / HFP020203 / CcI3).